The following is an 863-amino-acid chain: DNA-directed RNA polymerase subunit beta' (863 aa).

Residues 1–83 form a disordered region; sequence MSGEVAQDQP…SKKKETKASQ (83 aa). Polar residues predominate over residues 23–36; the sequence is EIVNSAITVQSSAK. Zn(2+) contacts are provided by Cys159, Cys161, Cys180, and Cys183. Residues Asp621, Asp623, and Asp625 each contribute to the Mg(2+) site.

Belongs to the RNA polymerase beta' chain family. RpoC1 subfamily. In plastids the minimal PEP RNA polymerase catalytic core is composed of four subunits: alpha, beta, beta', and beta''. When a (nuclear-encoded) sigma factor is associated with the core the holoenzyme is formed, which can initiate transcription. Mg(2+) serves as cofactor. Requires Zn(2+) as cofactor.

The protein resides in the plastid. The protein localises to the chloroplast. It catalyses the reaction RNA(n) + a ribonucleoside 5'-triphosphate = RNA(n+1) + diphosphate. Its function is as follows. DNA-dependent RNA polymerase catalyzes the transcription of DNA into RNA using the four ribonucleoside triphosphates as substrates. In Nephroselmis olivacea (Green alga), this protein is DNA-directed RNA polymerase subunit beta'.